A 489-amino-acid chain; its full sequence is IPT/TIG domain-containing protein BACOVA_02650 (489 aa).

The first 27 residues, Met1–Ser27, serve as a signal peptide directing secretion. A lipid anchor (N-palmitoyl cysteine) is attached at Cys28. Residue Cys28 is the site of S-diacylglycerol cysteine attachment. IPT/TIG domains are found at residues Val57–Leu103, Pro136–Ala204, and Pro232–Gly304.

It is found in the cell outer membrane. It functions in the pathway glucan metabolism; xyloglucan degradation. Its function is as follows. Polysaccharide-binding protein present at the surface of the cell. Probably mediates xyloglucan-binding before xyloglucan transport in the periplasm for degradation. The chain is IPT/TIG domain-containing protein BACOVA_02650 from Bacteroides ovatus (strain ATCC 8483 / DSM 1896 / JCM 5824 / BCRC 10623 / CCUG 4943 / NCTC 11153).